A 352-amino-acid chain; its full sequence is Ribosome biogenesis protein BRX1 homolog (352 aa).

The tract at residues 1-55 (MGKFSKIKKVQEEESAHQKMEWEAAGAKDSSSDDSSDESDNDDQPKQATEETRKR) is disordered. Basic and acidic residues predominate over residues 9–22 (KVQEEESAHQKMEW). Positions 32–42 (SDDSSDESDND) are enriched in acidic residues. Over residues 43–55 (DQPKQATEETRKR) the composition is skewed to basic and acidic residues. A Brix domain is found at 63–253 (ERVLVLCSRG…MVRLFAGSFE (191 aa)).

It belongs to the BRX1 family.

It is found in the nucleus. The protein resides in the nucleolus. Its function is as follows. Required for biogenesis of the 60S ribosomal subunit. This chain is Ribosome biogenesis protein BRX1 homolog, found in Caenorhabditis elegans.